We begin with the raw amino-acid sequence, 206 residues long: Small ribosomal subunit protein uS4 (206 aa).

Residues threonine 96–lysine 156 enclose the S4 RNA-binding domain.

The protein belongs to the universal ribosomal protein uS4 family. As to quaternary structure, part of the 30S ribosomal subunit. Contacts protein S5. The interaction surface between S4 and S5 is involved in control of translational fidelity.

In terms of biological role, one of the primary rRNA binding proteins, it binds directly to 16S rRNA where it nucleates assembly of the body of the 30S subunit. Its function is as follows. With S5 and S12 plays an important role in translational accuracy. This is Small ribosomal subunit protein uS4 from Shewanella denitrificans (strain OS217 / ATCC BAA-1090 / DSM 15013).